A 329-amino-acid polypeptide reads, in one-letter code: Phosphate acyltransferase (329 aa).

The protein belongs to the PlsX family. In terms of assembly, homodimer. Probably interacts with PlsY.

The protein localises to the cytoplasm. It catalyses the reaction a fatty acyl-[ACP] + phosphate = an acyl phosphate + holo-[ACP]. It participates in lipid metabolism; phospholipid metabolism. Functionally, catalyzes the reversible formation of acyl-phosphate (acyl-PO(4)) from acyl-[acyl-carrier-protein] (acyl-ACP). This enzyme utilizes acyl-ACP as fatty acyl donor, but not acyl-CoA. In Anoxybacillus flavithermus (strain DSM 21510 / WK1), this protein is Phosphate acyltransferase.